Here is a 266-residue protein sequence, read N- to C-terminus: Large ribosomal subunit protein eL8 (266 aa).

Glycyl lysine isopeptide (Lys-Gly) (interchain with G-Cter in SUMO2) cross-links involve residues lysine 11, lysine 20, and lysine 21. Lysine 34 is modified (N6-acetyllysine). Residue lysine 48 forms a Glycyl lysine isopeptide (Lys-Gly) (interchain with G-Cter in SUMO2) linkage. Lysine 97 bears the N6-acetyllysine; alternate mark. Residue lysine 97 forms a Glycyl lysine isopeptide (Lys-Gly) (interchain with G-Cter in SUMO2); alternate linkage. Residue lysine 125 forms a Glycyl lysine isopeptide (Lys-Gly) (interchain with G-Cter in SUMO2) linkage. The residue at position 217 (lysine 217) is an N6-acetyllysine. Lysine 245 participates in a covalent cross-link: Glycyl lysine isopeptide (Lys-Gly) (interchain with G-Cter in SUMO2).

Belongs to the eukaryotic ribosomal protein eL8 family. In terms of assembly, component of the large ribosomal subunit. Interacts with CRY1. Interacts with DICER1, AGO2, TARBP2, MOV10 and EIF6; they form a large RNA-induced silencing complex (RISC).

The protein resides in the cytoplasm. In terms of biological role, component of the large ribosomal subunit. The ribosome is a large ribonucleoprotein complex responsible for the synthesis of proteins in the cell. The sequence is that of Large ribosomal subunit protein eL8 (Rpl7a) from Rattus norvegicus (Rat).